The following is a 224-amino-acid chain: Cytidylate kinase (224 aa).

9 to 17 contacts ATP; sequence GPSGVGKGT.

It belongs to the cytidylate kinase family. Type 1 subfamily.

The protein resides in the cytoplasm. It carries out the reaction CMP + ATP = CDP + ADP. It catalyses the reaction dCMP + ATP = dCDP + ADP. This is Cytidylate kinase from Dichelobacter nodosus (strain VCS1703A).